The sequence spans 174 residues: Protein GrpE (174 aa).

The protein belongs to the GrpE family. In terms of assembly, homodimer.

The protein resides in the cytoplasm. Functionally, participates actively in the response to hyperosmotic and heat shock by preventing the aggregation of stress-denatured proteins, in association with DnaK and GrpE. It is the nucleotide exchange factor for DnaK and may function as a thermosensor. Unfolded proteins bind initially to DnaJ; upon interaction with the DnaJ-bound protein, DnaK hydrolyzes its bound ATP, resulting in the formation of a stable complex. GrpE releases ADP from DnaK; ATP binding to DnaK triggers the release of the substrate protein, thus completing the reaction cycle. Several rounds of ATP-dependent interactions between DnaJ, DnaK and GrpE are required for fully efficient folding. This chain is Protein GrpE, found in Pseudothermotoga lettingae (strain ATCC BAA-301 / DSM 14385 / NBRC 107922 / TMO) (Thermotoga lettingae).